Reading from the N-terminus, the 282-residue chain is Small ribosomal subunit protein uS2 (282 aa).

Positions 245-266 (AEEAVEELPLPTGEAQDEASSK) are disordered.

This sequence belongs to the universal ribosomal protein uS2 family.

The polypeptide is Small ribosomal subunit protein uS2 (rpsB) (Chlamydia trachomatis serovar D (strain ATCC VR-885 / DSM 19411 / UW-3/Cx)).